A 137-amino-acid chain; its full sequence is Protein MGF 110-7L (137 aa).

Residues 1-20 form the signal peptide; the sequence is MLVIILGIIGLLASSNLVSS. Residues N69, N70, and N105 are each glycosylated (N-linked (GlcNAc...) asparagine; by host).

This sequence belongs to the asfivirus MGF 110 family.

Functionally, plays a role in virus cell tropism, and may be required for efficient virus replication in macrophages. This African swine fever virus (isolate Tick/South Africa/Pretoriuskop Pr4/1996) (ASFV) protein is Protein MGF 110-7L.